Consider the following 201-residue polypeptide: FMN-dependent NADH:quinone oxidoreductase (201 aa).

Residues S9 and 16–18 (SYS) contribute to the FMN site.

The protein belongs to the azoreductase type 1 family. In terms of assembly, homodimer. FMN serves as cofactor.

The enzyme catalyses 2 a quinone + NADH + H(+) = 2 a 1,4-benzosemiquinone + NAD(+). It catalyses the reaction N,N-dimethyl-1,4-phenylenediamine + anthranilate + 2 NAD(+) = 2-(4-dimethylaminophenyl)diazenylbenzoate + 2 NADH + 2 H(+). Functionally, quinone reductase that provides resistance to thiol-specific stress caused by electrophilic quinones. Also exhibits azoreductase activity. Catalyzes the reductive cleavage of the azo bond in aromatic azo compounds to the corresponding amines. The chain is FMN-dependent NADH:quinone oxidoreductase from Mesomycoplasma hyopneumoniae (strain 7448) (Mycoplasma hyopneumoniae).